Here is a 61-residue protein sequence, read N- to C-terminus: Cytotoxin 2 (61 aa).

4 cysteine pairs are disulfide-bonded: Cys3-Cys22, Cys15-Cys39, Cys43-Cys54, and Cys55-Cys60.

Belongs to the three-finger toxin family. Short-chain subfamily. Type IB cytotoxin sub-subfamily. Expressed by the venom gland.

The protein resides in the secreted. Its function is as follows. This protein lyses red blood cells, has cytotoxic activity and induces hypotension, but is not neurotoxic. In addition, it induces direct paralysis of the muscle fiber. This Hemachatus haemachatus (Rinkhals) protein is Cytotoxin 2.